The sequence spans 254 residues: UDP-2,3-diacylglucosamine hydrolase (254 aa).

The Mn(2+) site is built by Asp8, His10, Asp41, Asn79, and His114. 79 to 80 (NR) is a substrate binding site. Positions 122, 160, 164, 167, and 195 each coordinate substrate. Mn(2+) contacts are provided by His195 and His197.

It belongs to the LpxH family. Mn(2+) serves as cofactor.

Its subcellular location is the cell inner membrane. The catalysed reaction is UDP-2-N,3-O-bis[(3R)-3-hydroxytetradecanoyl]-alpha-D-glucosamine + H2O = 2-N,3-O-bis[(3R)-3-hydroxytetradecanoyl]-alpha-D-glucosaminyl 1-phosphate + UMP + 2 H(+). It functions in the pathway glycolipid biosynthesis; lipid IV(A) biosynthesis; lipid IV(A) from (3R)-3-hydroxytetradecanoyl-[acyl-carrier-protein] and UDP-N-acetyl-alpha-D-glucosamine: step 4/6. Its function is as follows. Hydrolyzes the pyrophosphate bond of UDP-2,3-diacylglucosamine to yield 2,3-diacylglucosamine 1-phosphate (lipid X) and UMP by catalyzing the attack of water at the alpha-P atom. Involved in the biosynthesis of lipid A, a phosphorylated glycolipid that anchors the lipopolysaccharide to the outer membrane of the cell. The polypeptide is UDP-2,3-diacylglucosamine hydrolase (Aeromonas salmonicida (strain A449)).